Reading from the N-terminus, the 448-residue chain is Iroquois-class homeodomain protein irx-3 (448 aa).

The segment at residues 108–170 (DPSRPKNATR…NARRRLKKEN (63 aa)) is a DNA-binding region (homeobox; TALE-type). Disordered stretches follow at residues 171-250 (KMTW…NAPE) and 387-410 (SGTA…DRSS). Acidic residues predominate over residues 195–222 (KHEDDEEIDLENIDTEDIESKEDLDDPD). Residues 223–237 (TDIHSDSKTDARSDS) show a composition bias toward basic and acidic residues. Residues 238-248 (EASDGFEDLNA) are compositionally biased toward acidic residues. Positions 396–406 (AEPKHSTDSLT) are enriched in basic and acidic residues.

This sequence belongs to the TALE/IRO homeobox family. In terms of tissue distribution, expressed in the neural plate in overlapping patterns with other irx members, which all share an anterior border of expression. Outside the nervous system and at tailbud stages, expressed in the developing otic vesicle, branchial arches, prospective heart region and pronephros.

It localises to the nucleus. In terms of biological role, acts partially redundantly with other irx members in neural patterning. Required for formation of the posterior forebrain, midbrain, hindbrain, and to a lesser extent, spinal cord. Both up-regulates and down-regulates gene expression during neural development. Acts early in neural plate development to induce proneural gene expression and specify a neural precursor state. Also up-regulates repressors that prevent neuronal differentiation. Required during at least two stages of pronephros kidney development; during neurula stages, maintains transcription of key renal genes to define the size and identity of the pronephric anlage, probably in part through regulation of bmp-signaling. Subsequently required for proper formation of the intermediate tubule segment of the pronephros. The polypeptide is Iroquois-class homeodomain protein irx-3 (Xenopus tropicalis (Western clawed frog)).